The chain runs to 250 residues: Triosephosphate isomerase (250 aa).

A substrate-binding site is contributed by 9–11; that stretch reads NWK. Histidine 95 serves as the catalytic Electrophile. Glutamate 167 serves as the catalytic Proton acceptor. Substrate-binding positions include glycine 173, serine 212, and 233 to 234; that span reads GG.

This sequence belongs to the triosephosphate isomerase family. As to quaternary structure, homodimer.

It localises to the cytoplasm. It carries out the reaction D-glyceraldehyde 3-phosphate = dihydroxyacetone phosphate. It functions in the pathway carbohydrate biosynthesis; gluconeogenesis. The protein operates within carbohydrate degradation; glycolysis; D-glyceraldehyde 3-phosphate from glycerone phosphate: step 1/1. Its function is as follows. Involved in the gluconeogenesis. Catalyzes stereospecifically the conversion of dihydroxyacetone phosphate (DHAP) to D-glyceraldehyde-3-phosphate (G3P). This chain is Triosephosphate isomerase, found in Psychromonas ingrahamii (strain DSM 17664 / CCUG 51855 / 37).